A 443-amino-acid polypeptide reads, in one-letter code: Probable D-serine dehydratase (443 aa).

Lys-118 carries the post-translational modification N6-(pyridoxal phosphate)lysine.

It belongs to the serine/threonine dehydratase family. DsdA subfamily. Requires pyridoxal 5'-phosphate as cofactor.

It catalyses the reaction D-serine = pyruvate + NH4(+). This is Probable D-serine dehydratase from Vibrio campbellii (strain ATCC BAA-1116).